Consider the following 381-residue polypeptide: 4-hydroxy-3-methylbut-2-en-1-yl diphosphate synthase (flavodoxin) (381 aa).

Residues cysteine 273, cysteine 276, cysteine 308, and glutamate 315 each contribute to the [4Fe-4S] cluster site.

Belongs to the IspG family. It depends on [4Fe-4S] cluster as a cofactor.

The catalysed reaction is (2E)-4-hydroxy-3-methylbut-2-enyl diphosphate + oxidized [flavodoxin] + H2O + 2 H(+) = 2-C-methyl-D-erythritol 2,4-cyclic diphosphate + reduced [flavodoxin]. It functions in the pathway isoprenoid biosynthesis; isopentenyl diphosphate biosynthesis via DXP pathway; isopentenyl diphosphate from 1-deoxy-D-xylulose 5-phosphate: step 5/6. Converts 2C-methyl-D-erythritol 2,4-cyclodiphosphate (ME-2,4cPP) into 1-hydroxy-2-methyl-2-(E)-butenyl 4-diphosphate. The chain is 4-hydroxy-3-methylbut-2-en-1-yl diphosphate synthase (flavodoxin) from Gluconobacter oxydans (strain 621H) (Gluconobacter suboxydans).